Consider the following 117-residue polypeptide: Immunoglobulin kappa variable 1-12 (117 aa).

The first 22 residues, 1 to 22 (MDMRVPAQLLGLLLLWFPGSRC), serve as a signal peptide directing secretion. The framework-1 stretch occupies residues 23-45 (DIQMTQSPSSVSASVGDRVTITC). In terms of domain architecture, Ig-like spans 24–117 (IQMTQSPSSV…YYCQQANSFP (94 aa)). A disulfide bond links cysteine 45 and cysteine 110. Positions 46-56 (RASQGISSWLA) are complementarity-determining-1. The segment at 57–71 (WYQQKPGKAPKLLIY) is framework-2. The complementarity-determining-2 stretch occupies residues 72–78 (AASSLQS). The segment at 79–110 (GVPSRFSGSGSGTDFTLTISSLQPEDFATYYC) is framework-3. The tract at residues 111 to 117 (QQANSFP) is complementarity-determining-3.

Immunoglobulins are composed of two identical heavy chains and two identical light chains; disulfide-linked.

The protein resides in the secreted. The protein localises to the cell membrane. Functionally, v region of the variable domain of immunoglobulin light chains that participates in the antigen recognition. Immunoglobulins, also known as antibodies, are membrane-bound or secreted glycoproteins produced by B lymphocytes. In the recognition phase of humoral immunity, the membrane-bound immunoglobulins serve as receptors which, upon binding of a specific antigen, trigger the clonal expansion and differentiation of B lymphocytes into immunoglobulins-secreting plasma cells. Secreted immunoglobulins mediate the effector phase of humoral immunity, which results in the elimination of bound antigens. The antigen binding site is formed by the variable domain of one heavy chain, together with that of its associated light chain. Thus, each immunoglobulin has two antigen binding sites with remarkable affinity for a particular antigen. The variable domains are assembled by a process called V-(D)-J rearrangement and can then be subjected to somatic hypermutations which, after exposure to antigen and selection, allow affinity maturation for a particular antigen. The sequence is that of Immunoglobulin kappa variable 1-12 from Homo sapiens (Human).